A 147-amino-acid polypeptide reads, in one-letter code: Hemoglobin subunit gamma-1 (147 aa).

An N-acetylglycine modification is found at Gly-2. Residues His-3–His-147 enclose the Globin domain. Thr-13 is modified (phosphothreonine). Phosphoserine is present on residues Ser-45, Ser-51, and Ser-53. Lys-60 bears the N6-acetyllysine mark. A heme b-binding site is contributed by His-64. Lys-83 bears the N6-acetyllysine mark. His-93 lines the heme b pocket. At Cys-94 the chain carries S-nitrosocysteine. Residue Ser-140 is modified to Phosphoserine.

The protein belongs to the globin family. Heterotetramer of two alpha chains and two gamma chains in fetal hemoglobin (Hb F). Red blood cells.

Its function is as follows. Gamma chains make up the fetal hemoglobin F, in combination with alpha chains. The sequence is that of Hemoglobin subunit gamma-1 (HBG1) from Pongo pygmaeus (Bornean orangutan).